We begin with the raw amino-acid sequence, 154 residues long: Deoxyuridine 5'-triphosphate nucleotidohydrolase (154 aa).

Substrate-binding positions include 72–74, N85, 89–91, and M99; these read RSG and LID.

It belongs to the dUTPase family. Requires Mg(2+) as cofactor.

The catalysed reaction is dUTP + H2O = dUMP + diphosphate + H(+). Its pathway is pyrimidine metabolism; dUMP biosynthesis; dUMP from dCTP (dUTP route): step 2/2. Its function is as follows. This enzyme is involved in nucleotide metabolism: it produces dUMP, the immediate precursor of thymidine nucleotides and it decreases the intracellular concentration of dUTP so that uracil cannot be incorporated into DNA. The chain is Deoxyuridine 5'-triphosphate nucleotidohydrolase from Psychrobacter cryohalolentis (strain ATCC BAA-1226 / DSM 17306 / VKM B-2378 / K5).